The following is a 301-amino-acid chain: 4-diphosphocytidyl-2-C-methyl-D-erythritol kinase (301 aa).

The active site involves Lys-10. 96–106 (PMGGGVGGGSS) is a binding site for ATP. Asp-138 is a catalytic residue.

This sequence belongs to the GHMP kinase family. IspE subfamily.

It catalyses the reaction 4-CDP-2-C-methyl-D-erythritol + ATP = 4-CDP-2-C-methyl-D-erythritol 2-phosphate + ADP + H(+). The protein operates within isoprenoid biosynthesis; isopentenyl diphosphate biosynthesis via DXP pathway; isopentenyl diphosphate from 1-deoxy-D-xylulose 5-phosphate: step 3/6. In terms of biological role, catalyzes the phosphorylation of the position 2 hydroxy group of 4-diphosphocytidyl-2C-methyl-D-erythritol. This Alcanivorax borkumensis (strain ATCC 700651 / DSM 11573 / NCIMB 13689 / SK2) protein is 4-diphosphocytidyl-2-C-methyl-D-erythritol kinase.